Here is a 34-residue protein sequence, read N- to C-terminus: Leader peptide SpeFL (34 aa).

The Ornithine recognition loop signature appears at 10 to 16 (HIRRTTH). Position 13 (Arg-13) interacts with L-ornithine.

Belongs to the speF operon leader peptide family. In terms of assembly, binds ornithine in stalled 70S ribosomes, blocking the upper two-thirds of the exit tunnel. Contacts 23S rRNA and ribosomal proteins L4 and L22.

A small protein (arrest peptide) encoded upstream of inducible ornithine carboxylase gene (speF) that controls expression of downstream genes (speF and potE) by transcriptional and translational attenuation. Its expression controls transcription and translation of downstream SpeF; translation pausing at low Arg levels on this mRNA prevents premature Rho-dependent transcription termination of speF and also enhances SprF translation by preventing sequestration of its ribosome-binding site. In the presence of high Arg levels translation of this protein allows the formation of an speF mRNA structure that is degraded by RNase G. In Salmonella typhimurium (strain SL1344), this protein is Leader peptide SpeFL.